The following is a 436-amino-acid chain: tRNA-2-methylthio-N(6)-dimethylallyladenosine synthase (436 aa).

One can recognise an MTTase N-terminal domain in the interval 5–120 (KKLFIQTLGC…IKDVVDVKGA (116 aa)). Residues C14, C51, C83, C152, C156, and C159 each coordinate [4Fe-4S] cluster. The region spanning 138 to 372 (KTNKYRASVN…IELHKRYLEE (235 aa)) is the Radical SAM core domain. The TRAM domain maps to 375-436 (PKLIGETLNI…RTSLKGEVVN (62 aa)).

This sequence belongs to the methylthiotransferase family. MiaB subfamily. In terms of assembly, monomer. The cofactor is [4Fe-4S] cluster.

The protein resides in the cytoplasm. The catalysed reaction is N(6)-dimethylallyladenosine(37) in tRNA + (sulfur carrier)-SH + AH2 + 2 S-adenosyl-L-methionine = 2-methylsulfanyl-N(6)-dimethylallyladenosine(37) in tRNA + (sulfur carrier)-H + 5'-deoxyadenosine + L-methionine + A + S-adenosyl-L-homocysteine + 2 H(+). Its function is as follows. Catalyzes the methylthiolation of N6-(dimethylallyl)adenosine (i(6)A), leading to the formation of 2-methylthio-N6-(dimethylallyl)adenosine (ms(2)i(6)A) at position 37 in tRNAs that read codons beginning with uridine. This Aliarcobacter butzleri (strain RM4018) (Arcobacter butzleri) protein is tRNA-2-methylthio-N(6)-dimethylallyladenosine synthase.